Reading from the N-terminus, the 195-residue chain is Translation machinery-associated protein 22 (195 aa).

One can recognise an SUI1 domain in the interval Val94–Leu165. The interval Glu176–Ala195 is disordered.

It belongs to the DENR family. In terms of assembly, interacts with the 40S ribosomal subunit.

It localises to the cytoplasm. This Scheffersomyces stipitis (strain ATCC 58785 / CBS 6054 / NBRC 10063 / NRRL Y-11545) (Yeast) protein is Translation machinery-associated protein 22 (TMA22).